The sequence spans 736 residues: Polyribonucleotide nucleotidyltransferase (736 aa).

Mg(2+) is bound by residues D506 and D512. The region spanning 573-632 (PRLTTIQVPVDAIGLIIGKGGETIRSITEETGAEINIEDDGTVTIACSSVEGTHAALATI) is the KH domain. The S1 motif domain occupies 642-717 (GTIYLGKVRD…GKTRFALSMR (76 aa)).

Belongs to the polyribonucleotide nucleotidyltransferase family. The cofactor is Mg(2+).

The protein localises to the cytoplasm. It catalyses the reaction RNA(n+1) + phosphate = RNA(n) + a ribonucleoside 5'-diphosphate. Functionally, involved in mRNA degradation. Catalyzes the phosphorolysis of single-stranded polyribonucleotides processively in the 3'- to 5'-direction. The chain is Polyribonucleotide nucleotidyltransferase from Chlorobium limicola (strain DSM 245 / NBRC 103803 / 6330).